We begin with the raw amino-acid sequence, 750 residues long: Photosystem I P700 chlorophyll a apoprotein A1 (750 aa).

8 helical membrane-spanning segments follow: residues 70 to 93 (VFSAHFGQLSIIFLWLSGMYFHGA), 156 to 179 (LYCTAIGALVFAALMLFAGWFHYH), 195 to 219 (LNHHLAGLLGLGSLSWAGHQVHVSL), 291 to 309 (IAHHHLAIAILFLIAGHMY), 346 to 369 (WHAQLSLNLAMLGSLTIVVAHHMY), 385 to 411 (LSLFTHHMWIGGFLIVGAAAHAAIFMV), 433 to 455 (AIISHLNWVCIFLGFHSFGLYIH), and 531 to 549 (FLVHHIHAFTIHVTVLILL). [4Fe-4S] cluster-binding residues include cysteine 573 and cysteine 582. A run of 2 helical transmembrane segments spans residues 589-610 (HVFLGLFWMYNAISVVIFHFSW) and 664-686 (LSAYGLFFLGAHFVWAFSLMFLF). A chlorophyll a'-binding site is contributed by histidine 675. Methionine 683 and tyrosine 691 together coordinate chlorophyll a. Residue tryptophan 692 coordinates phylloquinone. Residues 724–744 (AVGVTHYLLGGIATTWAFFLA) traverse the membrane as a helical segment.

The protein belongs to the PsaA/PsaB family. The PsaA/B heterodimer binds the P700 chlorophyll special pair and subsequent electron acceptors. PSI consists of a core antenna complex that captures photons, and an electron transfer chain that converts photonic excitation into a charge separation. The eukaryotic PSI reaction center is composed of at least 11 subunits. P700 is a chlorophyll a/chlorophyll a' dimer, A0 is one or more chlorophyll a, A1 is one or both phylloquinones and FX is a shared 4Fe-4S iron-sulfur center. serves as cofactor.

Its subcellular location is the plastid. It is found in the chloroplast thylakoid membrane. The enzyme catalyses reduced [plastocyanin] + hnu + oxidized [2Fe-2S]-[ferredoxin] = oxidized [plastocyanin] + reduced [2Fe-2S]-[ferredoxin]. Functionally, psaA and PsaB bind P700, the primary electron donor of photosystem I (PSI), as well as the electron acceptors A0, A1 and FX. PSI is a plastocyanin-ferredoxin oxidoreductase, converting photonic excitation into a charge separation, which transfers an electron from the donor P700 chlorophyll pair to the spectroscopically characterized acceptors A0, A1, FX, FA and FB in turn. Oxidized P700 is reduced on the lumenal side of the thylakoid membrane by plastocyanin. The chain is Photosystem I P700 chlorophyll a apoprotein A1 from Nasturtium officinale (Watercress).